The primary structure comprises 151 residues: Ribosome maturation factor RimP (151 aa).

This sequence belongs to the RimP family.

The protein localises to the cytoplasm. Functionally, required for maturation of 30S ribosomal subunits. The protein is Ribosome maturation factor RimP of Aliivibrio fischeri (strain MJ11) (Vibrio fischeri).